The primary structure comprises 110 residues: MVYIDHNGRVWEKRPWDWRRIVELFVGIWFAIKQLFLTFLAPFTGNNNQANPRRGNGWGGGGGWGGGGGGGGGGGGGRPGSGSGGLRPNRRIGRIQPTMSCNMPAGGGUG.

The Lumenal portion of the chain corresponds to 1–20 (MVYIDHNGRVWEKRPWDWRR). The chain crosses the membrane as a helical; Signal-anchor for type III membrane protein span at residues 21–41 (IVELFVGIWFAIKQLFLTFLA). Residues 42-110 (PFTGNNNQAN…CNMPAGGGUG (69 aa)) are Cytoplasmic-facing. The disordered stretch occupies residues 51 to 110 (NPRRGNGWGGGGGWGGGGGGGGGGGGGRPGSGSGGLRPNRRIGRIQPTMSCNMPAGGGUG). Residues 56 to 85 (NGWGGGGGWGGGGGGGGGGGGGRPGSGSGG) show a composition bias toward gly residues. Residue selenocysteine 109 is a non-standard amino acid, selenocysteine.

The protein localises to the golgi apparatus membrane. In terms of biological role, plays a role in the life span. May be involved in regulating the redox state of the cell and possesses anticarcinogenic properties. This chain is Glycine-rich selenoprotein (SelG), found in Drosophila melanogaster (Fruit fly).